The chain runs to 161 residues: 18.1 kDa class I heat shock protein (161 aa).

Residues 47–161 (ETAAFAGARI…PDVKSIQVTG (115 aa)) form the sHSP domain.

It belongs to the small heat shock protein (HSP20) family. May form oligomeric structures.

It localises to the cytoplasm. In Oryza sativa subsp. japonica (Rice), this protein is 18.1 kDa class I heat shock protein (HSP18.1).